We begin with the raw amino-acid sequence, 344 residues long: Heat-inducible transcription repressor HrcA (344 aa).

Belongs to the HrcA family.

Functionally, negative regulator of class I heat shock genes (grpE-dnaK-dnaJ and groELS operons). Prevents heat-shock induction of these operons. This chain is Heat-inducible transcription repressor HrcA, found in Streptococcus sanguinis (strain SK36).